The primary structure comprises 312 residues: D-alanine--D-alanine ligase (312 aa).

The ATP-grasp domain maps to 102 to 307; it reads KKIFKMEGIP…FPELTDRLIK (206 aa). Position 136–191 (136–191) interacts with ATP; that stretch reads IKEVGVPAVVKANTQGSTIGITFVHVKEKMAEAIESALKYDQDVLVEQFVAGTEVT. Mg(2+)-binding residues include aspartate 262, glutamate 274, and asparagine 276.

This sequence belongs to the D-alanine--D-alanine ligase family. Requires Mg(2+) as cofactor. The cofactor is Mn(2+).

It is found in the cytoplasm. It catalyses the reaction 2 D-alanine + ATP = D-alanyl-D-alanine + ADP + phosphate + H(+). Its pathway is cell wall biogenesis; peptidoglycan biosynthesis. In terms of biological role, cell wall formation. This is D-alanine--D-alanine ligase from Desulforamulus reducens (strain ATCC BAA-1160 / DSM 100696 / MI-1) (Desulfotomaculum reducens).